The following is a 466-amino-acid chain: Acetylornithine aminotransferase, mitochondrial (466 aa).

An N6-(pyridoxal phosphate)lysine modification is found at Lys-308.

This sequence belongs to the class-III pyridoxal-phosphate-dependent aminotransferase family. Requires pyridoxal 5'-phosphate as cofactor.

Its subcellular location is the mitochondrion matrix. The catalysed reaction is N(2)-acetyl-L-ornithine + 2-oxoglutarate = N-acetyl-L-glutamate 5-semialdehyde + L-glutamate. It participates in amino-acid biosynthesis; L-arginine biosynthesis; N(2)-acetyl-L-ornithine from L-glutamate: step 4/4. The protein is Acetylornithine aminotransferase, mitochondrial (ARG8) of Debaryomyces hansenii (strain ATCC 36239 / CBS 767 / BCRC 21394 / JCM 1990 / NBRC 0083 / IGC 2968) (Yeast).